Reading from the N-terminus, the 200-residue chain is Large ribosomal subunit protein uL4 (200 aa).

The disordered stretch occupies residues Ala44–Gly70.

It belongs to the universal ribosomal protein uL4 family. In terms of assembly, part of the 50S ribosomal subunit.

Functionally, one of the primary rRNA binding proteins, this protein initially binds near the 5'-end of the 23S rRNA. It is important during the early stages of 50S assembly. It makes multiple contacts with different domains of the 23S rRNA in the assembled 50S subunit and ribosome. In terms of biological role, protein L4 is a both a transcriptional repressor and a translational repressor protein. It regulates transcription of the S10 operon (to which L4 belongs) by causing premature termination of transcription within the S10 leader. L4 controls the translation of the S10 operon by binding to its mRNA. Its function is as follows. This protein when expressed in E.coli represses both transcription and translation of the endogenous S10 operon. As the M.morganii S10 leader can be regulated in vitro by the E.coli L4 protein this strongly suggests the endogenous protein controls its own S10 operon in a similar fashion. Forms part of the polypeptide exit tunnel. The polypeptide is Large ribosomal subunit protein uL4 (rplD) (Morganella morganii (Proteus morganii)).